A 128-amino-acid polypeptide reads, in one-letter code: MDTITNLITSIKNAYMVKKQTVRVNATRINENFGRILLQEGFIRNIREHKDGQKFFLIFTLKYRKRGEKIITLKRISRPGWRIYSDFPKIPKVLGGMGIVILFTSQGIMTDREARKKKIGGELLCFVW.

The protein belongs to the universal ribosomal protein uS8 family. Part of the 30S ribosomal subunit.

The protein resides in the plastid. The protein localises to the chloroplast. Functionally, one of the primary rRNA binding proteins, it binds directly to 16S rRNA central domain where it helps coordinate assembly of the platform of the 30S subunit. This chain is Small ribosomal subunit protein uS8c (rps8), found in Gnetum parvifolium (Small-leaved jointfir).